Consider the following 281-residue polypeptide: Bidirectional sugar transporter SWEET14 (281 aa).

The Extracellular segment spans residues methionine 1–asparagine 6. A helical membrane pass occupies residues valine 7–proline 27. The MtN3/slv 1 domain maps to threonine 11–lysine 97. Residues valine 28–glycine 42 are Cytoplasmic-facing. The helical transmembrane segment at phenylalanine 43–leucine 63 threads the bilayer. At glutamine 64–phenylalanine 70 the chain is on the extracellular side. Residues leucine 71–isoleucine 91 traverse the membrane as a helical segment. The Cytoplasmic portion of the chain corresponds to threonine 92–lysine 104. Residues valine 105–threonine 125 traverse the membrane as a helical segment. Topologically, residues lysine 126 to lysine 132 are extracellular. Residues valine 133–methionine 153 traverse the membrane as a helical segment. One can recognise a MtN3/slv 2 domain in the interval valine 133 to tyrosine 216. Residues arginine 154 to proline 166 lie on the Cytoplasmic side of the membrane. A helical membrane pass occupies residues phenylalanine 167 to isoleucine 187. The Extracellular segment spans residues lysine 188 to valine 192. The helical transmembrane segment at alanine 193–phenylalanine 213 threads the bilayer. The Cytoplasmic segment spans residues lysine 214–asparagine 281. Residues threonine 244–aspartate 259 are compositionally biased toward polar residues. The tract at residues threonine 244–asparagine 281 is disordered. Residues histidine 267–asparagine 281 show a composition bias toward basic and acidic residues.

It belongs to the SWEET sugar transporter family. Forms homooligomers and/or heterooligomers.

Its subcellular location is the cell membrane. Its function is as follows. Mediates both low-affinity uptake and efflux of sugar across the plasma membrane. The protein is Bidirectional sugar transporter SWEET14 of Arabidopsis thaliana (Mouse-ear cress).